Consider the following 614-residue polypeptide: MASNKVIGIDLGTTNSAVAVMEGGKPKIITNPDGSRTTPSVVAFKNGEIQVGEVAKRQEITNPNTVRSIKSHMGEEGYTVDIDGKKYTPQQISAMILQYIKGYAEDYLGDTVSEAVITVPAYFNDAQRQATKDAGKIAGLDVKRIINEPTAAALAYGLDKQDKDEKILVYDLGGGTFDVSVLELGDGVFQVLSTNGDTHLGGDDFDQRIIDYLVAEFKKENGVDLAQDKMALQRLKDAAEKAKKELSGVNQTEISLPFIASNDNGPLHLQTTLTRAKFNELTHDLVEKTKIPFENALKDAGLSTSDIDEVILNGGSTRIPAVQEAVKEWSGKEPNHSINPDEAVALGAAVQGGVLTGDVKDVVLLDVTPLSLGIETMGGVMTKLIEKNTTIPTSKSQTFSTAADNQTAVDIHVLQGERPMAADNKSLGRFQLTDIPAAPRGIPQIEVTFDIDKNGIVNVSAKDKGTGKEQKITIKDSNGLSDEEIEKMMNEAKANEEADKKKKEEVDLNNEVDQLIFQTDKTLKDVEGKVSEDEIKGVKDAEEELKKAKADGNLDDMKAKKDTLNEKVQAVAVKLYQQQQSQGGEAGAANGDASKKDDNTVDGDFHEVHDDDKK.

Phosphothreonine; by autocatalysis is present on threonine 176. The segment at 576 to 614 is disordered; that stretch reads YQQQQSQGGEAGAANGDASKKDDNTVDGDFHEVHDDDKK. The segment covering 577-589 has biased composition (low complexity); the sequence is QQQQSQGGEAGAA. Residues 593–614 are compositionally biased toward basic and acidic residues; that stretch reads ASKKDDNTVDGDFHEVHDDDKK.

This sequence belongs to the heat shock protein 70 family.

Functionally, acts as a chaperone. In Fructilactobacillus sanfranciscensis (Lactobacillus sanfranciscensis), this protein is Chaperone protein DnaK.